We begin with the raw amino-acid sequence, 646 residues long: Threonine--tRNA ligase (646 aa).

Residues 1–61 (MIKITFPDGS…NEDANFVLYK (61 aa)) enclose the TGS domain. The tract at residues 242-541 (DHRKIGKEMD…LIEHTAGKFP (300 aa)) is catalytic. Zn(2+)-binding residues include cysteine 337, histidine 388, and histidine 518.

The protein belongs to the class-II aminoacyl-tRNA synthetase family. As to quaternary structure, homodimer. It depends on Zn(2+) as a cofactor.

The protein localises to the cytoplasm. It catalyses the reaction tRNA(Thr) + L-threonine + ATP = L-threonyl-tRNA(Thr) + AMP + diphosphate + H(+). Its function is as follows. Catalyzes the attachment of threonine to tRNA(Thr) in a two-step reaction: L-threonine is first activated by ATP to form Thr-AMP and then transferred to the acceptor end of tRNA(Thr). Also edits incorrectly charged L-seryl-tRNA(Thr). This is Threonine--tRNA ligase from Phocaeicola vulgatus (strain ATCC 8482 / DSM 1447 / JCM 5826 / CCUG 4940 / NBRC 14291 / NCTC 11154) (Bacteroides vulgatus).